The primary structure comprises 353 residues: MGERTWPQLLAALLRGDELSTADTAWAMGEIMSGSAGSAQIAGFAIALRAKGETPAEVSGLVEAMLQHAVRVELPEDLRATAVDVVGTGGDLAHTVNISTMASLVVAGAGVRVVKHGNRAASSSCGTADVLEFLGLPLDLGPEGVAACVAEAGIGFCFAARFHPGMRHAGPVRRELGVPTAFNFLGPLTNPARPRAGAVGCFDARMAPVMAAVFAARGDSTLVLRGEDGLDEFTTAAPTRVWAAQNGTVREALLDAADLGVPRATLADLRGGDVACNADAVRRLLAGETGPIRDAVLVNAAAALATQAPLDGDLTEALRTGLSRAAESIDSGAAARTLNRWIEVAHAVRPVLG.

5-phospho-alpha-D-ribose 1-diphosphate-binding positions include Gly87, 90-91 (GD), Thr95, 97-100 (NIST), 115-123 (KHGNRAASS), and Thr127. Gly87 is an anthranilate binding site. Ser99 is a Mg(2+) binding site. Asn118 contributes to the anthranilate binding site. An anthranilate-binding site is contributed by Arg173. The Mg(2+) site is built by Asp231 and Glu232.

This sequence belongs to the anthranilate phosphoribosyltransferase family. In terms of assembly, homodimer. Mg(2+) is required as a cofactor.

The catalysed reaction is N-(5-phospho-beta-D-ribosyl)anthranilate + diphosphate = 5-phospho-alpha-D-ribose 1-diphosphate + anthranilate. Its pathway is amino-acid biosynthesis; L-tryptophan biosynthesis; L-tryptophan from chorismate: step 2/5. In terms of biological role, catalyzes the transfer of the phosphoribosyl group of 5-phosphorylribose-1-pyrophosphate (PRPP) to anthranilate to yield N-(5'-phosphoribosyl)-anthranilate (PRA). This is Anthranilate phosphoribosyltransferase from Salinispora arenicola (strain CNS-205).